We begin with the raw amino-acid sequence, 1891 residues long: Endoribonuclease Dicer-L (1891 aa).

One can recognise a Helicase ATP-binding domain in the interval 41-217; sequence LLEAALDHNT…DLEEKIQKLE (177 aa). Residue 54-61 participates in ATP binding; that stretch reads LNSGSGKT. A DECH box motif is present at residues 165–168; it reads DECH. The Helicase C-terminal domain maps to 425-594; sequence SFPSPFTNIL…SIDCGNTESE (170 aa). In terms of domain architecture, Dicer dsRNA-binding fold spans 622 to 714; sequence AIGHINRYCA…MPVGKETVKY (93 aa). The PAZ domain occupies 887-1034; sequence KFVEDIEKSE…LVPELCAIHP (148 aa). RNase III domains lie at 1248 to 1379 and 1635 to 1793; these read TSDM…ETSG and FENF…MDSG. 6 residues coordinate Mg(2+): Glu1292, Asp1370, Glu1373, Glu1674, Asp1779, and Glu1782. The 66-residue stretch at 1818–1883 folds into the DRBM domain; it reads VPRSPVRELL…ARRALRSLKA (66 aa).

The protein belongs to the helicase family. Dicer subfamily. As to quaternary structure, component of the RISC loading complex (RLC), or micro-RNA (miRNA) loading complex (miRLC), which is composed of dicer1, ago2 and tarbp2; dicer1 and tarbp2 are required to process precursor miRNAs (pre-miRNAs) to mature miRNAs and then load them onto ago2. Note that the trimeric RLC/miRLC is also referred to as RISC. Mg(2+) serves as cofactor. The cofactor is Mn(2+).

Its subcellular location is the cytoplasm. The enzyme catalyses Endonucleolytic cleavage to 5'-phosphomonoester.. Functionally, double-stranded RNA (dsRNA) endoribonuclease playing a central role in short dsRNA-mediated post-transcriptional gene silencing. Cleaves naturally occurring long dsRNAs and short hairpin pre-microRNAs (miRNA) into fragments of 21 to 23 nucleotides with 3' overhang of two nucleotides, producing respectively short interfering RNAs (siRNA) and mature microRNAs. SiRNAs and miRNAs serve as guide to direct the RNA-induced silencing complex (RISC) to complementary RNAs to degrade them or prevent their translation. Gene silencing mediated by siRNAs, also called RNA interference, controls the elimination of transcripts from mobile and repetitive DNA elements of the genome but also the degradation of exogenous RNA of viral origin for instance. The miRNA pathway on the other side is a mean to specifically regulate the expression of target genes. During embryonic development, at the left-right organizer, post-transcriptionally regulates the expression of dand5 in flow sensor cells. In post-flow stages, acts along with Bicc1 to repress dand5 mRNA translation and decay. Decreased Dand5 expression lifts repression of Nodal and defines leftness by induction of the lateral plate mesoderm Nodal signaling cascade. This chain is Endoribonuclease Dicer-L (dicer1.L), found in Xenopus laevis (African clawed frog).